Consider the following 109-residue polypeptide: Iron-sulfur cluster assembly protein CyaY (109 aa).

The protein belongs to the frataxin family.

Involved in iron-sulfur (Fe-S) cluster assembly. May act as a regulator of Fe-S biogenesis. This chain is Iron-sulfur cluster assembly protein CyaY, found in Verminephrobacter eiseniae (strain EF01-2).